A 154-amino-acid polypeptide reads, in one-letter code: Protein E6 (154 aa).

2 zinc fingers span residues 30 to 66 and 103 to 139; these read CVFC…CPRC and CCKC…CLHC.

Belongs to the papillomaviridae E6 protein family. In terms of assembly, forms homodimers. Interacts with ubiquitin-protein ligase UBE3A/E6-AP; this interaction stimulates UBE3A ubiquitin activity. Interacts with host TP53 and EP300; this interaction inhibits TP53 activity.

It localises to the host cytoplasm. The protein resides in the host nucleus. In terms of biological role, plays a major role in the induction and maintenance of cellular transformation. E6 associates with host UBE3A/E6-AP ubiquitin-protein ligase and modulates its activity. Sequesters tumor suppressor TP53 in the host cytoplasm and modulates its activity by interacting with host EP300 that results in the reduction of TP53 acetylation and activation. In turn, apoptosis induced by DNA damage is inhibited. E6 also protects host keratinocytes from apoptosis by mediating the degradation of host BAK1. May also inhibit host immune response. This Homo sapiens (Human) protein is Protein E6.